The chain runs to 371 residues: 2-oxoadipate dioxygenase/decarboxylase, chloroplastic (371 aa).

The N-terminal 50 residues, 1 to 50 (MISLHSSAIKASLYGSFPSSLRSTLSVSFSAGSLIRLPSVGKRNLSVVVS), are a transit peptide targeting the chloroplast. The 2-oxoadipate site is built by H113 and R117. A Fe(2+)-binding site is contributed by H113. Residue H250 participates in Fe(2+) binding. 2-oxoadipate contacts are provided by Q296 and Y320. E322 lines the Fe(2+) pocket.

It belongs to the 2-oxoadipate dioxygenase/decarboxylase family. Fe(2+) serves as cofactor.

Its subcellular location is the plastid. It is found in the chloroplast. The enzyme catalyses 2-oxoadipate + O2 = (R)-2-hydroxyglutarate + CO2. Its pathway is amino-acid degradation. Catalyzes the decarboxylation and hydroxylation of 2-oxoadipate (2OA) to form D-2-hydroxyglutarate (D-2-HGA). Is involved in a D-lysine catabolic pathway. This chain is 2-oxoadipate dioxygenase/decarboxylase, chloroplastic, found in Arabidopsis thaliana (Mouse-ear cress).